The following is a 510-amino-acid chain: Probable mannosyl-oligosaccharide alpha-1,2-mannosidase 1B (510 aa).

The N-terminal stretch at 1-21 is a signal peptide; that stretch reads MHFSSLSLPLTALSLVTPSLA. Asparagine 35, asparagine 95, asparagine 182, and asparagine 249 each carry an N-linked (GlcNAc...) asparagine glycan. Cysteine 332 and cysteine 361 are disulfide-bonded. A glycan (N-linked (GlcNAc...) asparagine) is linked at asparagine 366. Glutamate 375 serves as the catalytic Proton donor. Residue threonine 501 participates in Ca(2+) binding.

This sequence belongs to the glycosyl hydrolase 47 family. As to quaternary structure, monomer. It depends on Ca(2+) as a cofactor. The cofactor is Mg(2+).

The protein localises to the cytoplasmic vesicle lumen. It carries out the reaction N(4)-(alpha-D-Man-(1-&gt;2)-alpha-D-Man-(1-&gt;2)-alpha-D-Man-(1-&gt;3)-[alpha-D-Man-(1-&gt;2)-alpha-D-Man-(1-&gt;3)-[alpha-D-Man-(1-&gt;2)-alpha-D-Man-(1-&gt;6)]-alpha-D-Man-(1-&gt;6)]-beta-D-Man-(1-&gt;4)-beta-D-GlcNAc-(1-&gt;4)-beta-D-GlcNAc)-L-asparaginyl-[protein] (N-glucan mannose isomer 9A1,2,3B1,2,3) + 4 H2O = N(4)-(alpha-D-Man-(1-&gt;3)-[alpha-D-Man-(1-&gt;3)-[alpha-D-Man-(1-&gt;6)]-alpha-D-Man-(1-&gt;6)]-beta-D-Man-(1-&gt;4)-beta-D-GlcNAc-(1-&gt;4)-beta-D-GlcNAc)-L-asparaginyl-[protein] (N-glucan mannose isomer 5A1,2) + 4 beta-D-mannose. The catalysed reaction is N(4)-(alpha-D-Man-(1-&gt;2)-alpha-D-Man-(1-&gt;2)-alpha-D-Man-(1-&gt;3)-[alpha-D-Man-(1-&gt;3)-[alpha-D-Man-(1-&gt;2)-alpha-D-Man-(1-&gt;6)]-alpha-D-Man-(1-&gt;6)]-beta-D-Man-(1-&gt;4)-beta-D-GlcNAc-(1-&gt;4)-beta-D-GlcNAc)-L-asparaginyl-[protein] (N-glucan mannose isomer 8A1,2,3B1,3) + 3 H2O = N(4)-(alpha-D-Man-(1-&gt;3)-[alpha-D-Man-(1-&gt;3)-[alpha-D-Man-(1-&gt;6)]-alpha-D-Man-(1-&gt;6)]-beta-D-Man-(1-&gt;4)-beta-D-GlcNAc-(1-&gt;4)-beta-D-GlcNAc)-L-asparaginyl-[protein] (N-glucan mannose isomer 5A1,2) + 3 beta-D-mannose. It participates in protein modification; protein glycosylation. Its function is as follows. Involved in the maturation of Asn-linked oligosaccharides. Progressively trims alpha-1,2-linked mannose residues from Man(9)GlcNAc(2) to produce Man(5)GlcNAc(2). This Aspergillus flavus (strain ATCC 200026 / FGSC A1120 / IAM 13836 / NRRL 3357 / JCM 12722 / SRRC 167) protein is Probable mannosyl-oligosaccharide alpha-1,2-mannosidase 1B (mns1B).